Consider the following 146-residue polypeptide: Hemoglobin subunit beta-1 (146 aa).

In terms of domain architecture, Globin spans 2 to 146 (VWTNEERSII…VVSALGKQYH (145 aa)). His-63 and His-92 together coordinate heme b.

This sequence belongs to the globin family. Hb1 is a heterotetramer of two alpha chains and two beta-1 chains. In terms of tissue distribution, red blood cells.

Involved in oxygen transport from gills to the various peripheral tissues. The chain is Hemoglobin subunit beta-1 (hbb1) from Pseudaphritis urvillii (Congolli).